Consider the following 372-residue polypeptide: 4-hydroxy-3-methylbut-2-en-1-yl diphosphate synthase (flavodoxin) (372 aa).

[4Fe-4S] cluster contacts are provided by Cys270, Cys273, Cys305, and Glu312.

The protein belongs to the IspG family. The cofactor is [4Fe-4S] cluster.

It catalyses the reaction (2E)-4-hydroxy-3-methylbut-2-enyl diphosphate + oxidized [flavodoxin] + H2O + 2 H(+) = 2-C-methyl-D-erythritol 2,4-cyclic diphosphate + reduced [flavodoxin]. It functions in the pathway isoprenoid biosynthesis; isopentenyl diphosphate biosynthesis via DXP pathway; isopentenyl diphosphate from 1-deoxy-D-xylulose 5-phosphate: step 5/6. Functionally, converts 2C-methyl-D-erythritol 2,4-cyclodiphosphate (ME-2,4cPP) into 1-hydroxy-2-methyl-2-(E)-butenyl 4-diphosphate. This chain is 4-hydroxy-3-methylbut-2-en-1-yl diphosphate synthase (flavodoxin), found in Salmonella arizonae (strain ATCC BAA-731 / CDC346-86 / RSK2980).